A 112-amino-acid polypeptide reads, in one-letter code: MGVEKQVISSGNGQDFPKPGDRITMHYTGTLTNGKKFDSSVDRGSPFVCTIGVGQLIRGWDEGVPKMSLGEKAKLTITPDYGYGPRGFPGLIPPNSTLLFDVELLAINDKKA.

Positions methionine 1 to arginine 22 are disordered. Residues glycine 20 to asparagine 108 enclose the PPIase FKBP-type domain.

The protein belongs to the FKBP-type PPIase family. FKBP1 subfamily.

Its subcellular location is the cytoplasm. The protein localises to the nucleus. The enzyme catalyses [protein]-peptidylproline (omega=180) = [protein]-peptidylproline (omega=0). In terms of biological role, PPIases accelerate the folding of proteins. It catalyzes the cis-trans isomerization of proline imidic peptide bonds in oligopeptides. Has an important role in sexual development and serves as the target for rapamycin action. This chain is Peptidyl-prolyl cis-trans isomerase (fkh1), found in Schizosaccharomyces pombe (strain 972 / ATCC 24843) (Fission yeast).